Here is a 144-residue protein sequence, read N- to C-terminus: Large ribosomal subunit protein uL15 (144 aa).

Residues 1 to 16 are compositionally biased toward basic residues; it reads MVVRKEKKSRKYRGYR. The interval 1 to 35 is disordered; sequence MVVRKEKKSRKYRGYRTHGWGTKGQHRDRGAQGGR.

The protein belongs to the universal ribosomal protein uL15 family. Part of the 50S ribosomal subunit.

Binds to the 23S rRNA. The chain is Large ribosomal subunit protein uL15 from Sulfolobus acidocaldarius (strain ATCC 33909 / DSM 639 / JCM 8929 / NBRC 15157 / NCIMB 11770).